The primary structure comprises 888 residues: Aconitate hydratase A (888 aa).

3 residues coordinate [4Fe-4S] cluster: Cys-433, Cys-499, and Cys-502.

The protein belongs to the aconitase/IPM isomerase family. Monomer. [4Fe-4S] cluster serves as cofactor.

The enzyme catalyses citrate = D-threo-isocitrate. It catalyses the reaction (2S,3R)-3-hydroxybutane-1,2,3-tricarboxylate = 2-methyl-cis-aconitate + H2O. The protein operates within carbohydrate metabolism; tricarboxylic acid cycle; isocitrate from oxaloacetate: step 2/2. It functions in the pathway organic acid metabolism; propanoate degradation. Functionally, involved in the catabolism of short chain fatty acids (SCFA) via the tricarboxylic acid (TCA)(acetyl degradation route) and probably the 2-methylcitrate cycle I (propionate degradation route). Catalyzes the reversible isomerization of citrate to isocitrate via cis-aconitate. Could catalyze the hydration of 2-methyl-cis-aconitate to yield (2R,3S)-2-methylisocitrate. The apo form of AcnA functions as a RNA-binding regulatory protein. This chain is Aconitate hydratase A (acn), found in Streptococcus mutans serotype c (strain ATCC 700610 / UA159).